The primary structure comprises 205 residues: Large ribosomal subunit protein uL10 (205 aa).

The disordered stretch occupies residues 167-205; that stretch reads AQGAAPAEAKAEAPASEEKAADTPAEQPAESAPEAAPEA. Low complexity-rich tracts occupy residues 169-180 and 190-205; these read GAAPAEAKAEAP and PAEQ…APEA.

Belongs to the universal ribosomal protein uL10 family. As to quaternary structure, part of the ribosomal stalk of the 50S ribosomal subunit. The N-terminus interacts with L11 and the large rRNA to form the base of the stalk. The C-terminus forms an elongated spine to which L12 dimers bind in a sequential fashion forming a multimeric L10(L12)X complex.

Functionally, forms part of the ribosomal stalk, playing a central role in the interaction of the ribosome with GTP-bound translation factors. This is Large ribosomal subunit protein uL10 from Treponema denticola (strain ATCC 35405 / DSM 14222 / CIP 103919 / JCM 8153 / KCTC 15104).